The sequence spans 301 residues: MAAREMLYVNRETGKVEQERIICSSLVKFFIETRIGRALYSVLCKNSLFSRIVGWCQRLRVTRYFIKPFVTKYRICIEESASPLHDYASFNDFFVRKLKPDARPICQGEDICVTPADGAYLVFPSMADLSLFTIKNKPFSLESFLGDPQLAHQYAQGSMAIARLAPFDYHRFHFPIAGIAEAPRRINGHLFSIHPLMLKRNFEVFTENKREITIITSKEFGEVAYVEVGALNVGSIHQTFSPGSYVKKGAEKGFFAFGGSTVVLLFQPQRIIFDADLVGYSAQGLETRCRMGQSLGKHFSS.

Residues aspartate 117, histidine 173, and serine 260 each act as charge relay system; for autoendoproteolytic cleavage activity in the active site. Serine 260 serves as the catalytic Schiff-base intermediate with substrate; via pyruvic acid; for decarboxylase activity. Serine 260 carries the post-translational modification Pyruvic acid (Ser); by autocatalysis.

This sequence belongs to the phosphatidylserine decarboxylase family. PSD-B subfamily. Prokaryotic type II sub-subfamily. In terms of assembly, heterodimer of a large membrane-associated beta subunit and a small pyruvoyl-containing alpha subunit. It depends on pyruvate as a cofactor. Post-translationally, is synthesized initially as an inactive proenzyme. Formation of the active enzyme involves a self-maturation process in which the active site pyruvoyl group is generated from an internal serine residue via an autocatalytic post-translational modification. Two non-identical subunits are generated from the proenzyme in this reaction, and the pyruvate is formed at the N-terminus of the alpha chain, which is derived from the carboxyl end of the proenzyme. The autoendoproteolytic cleavage occurs by a canonical serine protease mechanism, in which the side chain hydroxyl group of the serine supplies its oxygen atom to form the C-terminus of the beta chain, while the remainder of the serine residue undergoes an oxidative deamination to produce ammonia and the pyruvoyl prosthetic group on the alpha chain. During this reaction, the Ser that is part of the protease active site of the proenzyme becomes the pyruvoyl prosthetic group, which constitutes an essential element of the active site of the mature decarboxylase.

The protein localises to the cell membrane. It catalyses the reaction a 1,2-diacyl-sn-glycero-3-phospho-L-serine + H(+) = a 1,2-diacyl-sn-glycero-3-phosphoethanolamine + CO2. Its pathway is phospholipid metabolism; phosphatidylethanolamine biosynthesis; phosphatidylethanolamine from CDP-diacylglycerol: step 2/2. In terms of biological role, catalyzes the formation of phosphatidylethanolamine (PtdEtn) from phosphatidylserine (PtdSer). This is Phosphatidylserine decarboxylase proenzyme from Chlamydia trachomatis serovar L2b (strain UCH-1/proctitis).